The sequence spans 174 residues: Regulator of G-protein signaling 8 (174 aa).

The 117-residue stretch at 46-162 (SFDILLSNKY…IRSKIYQDLL (117 aa)) folds into the RGS domain.

The protein localises to the cell membrane. It localises to the membrane. It is found in the perikaryon. Its subcellular location is the cell projection. The protein resides in the dendrite. The protein localises to the nucleus. In terms of biological role, regulates G protein-coupled receptor signaling cascades, including signaling via muscarinic acetylcholine receptors and dopamine receptors. Inhibits signal transduction by increasing the GTPase activity of G protein alpha subunits, thereby driving them into their inactive GDP-bound form. Modulates the activity of potassium channels that are activated in response to G protein-coupled receptor signaling. This is Regulator of G-protein signaling 8 (rgs8) from Danio rerio (Zebrafish).